The chain runs to 524 residues: Leucine-rich repeat-containing protein 1 (524 aa).

LRR repeat units lie at residues 11–34 (NRHV…IYRY), 35–58 (ARSL…FFQL), 60–81 (KLRK…IANF), 83–105 (QLVE…AFCK), 107–126 (LQVA…SFPE), 127–149 (LQNL…NIGN), 150–172 (LYNL…SLTQ), 173–196 (LRRL…IGAL), 198–218 (HLKD…EIGN), 219–242 (LKNL…ISGL), 244–264 (SLTY…GIGK), 265–288 (LKKL…IGDC), 290–310 (NLTE…SIGK), 311–334 (LKKL…IGGC), 336–356 (SLTM…EVSQ), 357–380 (AVEL…LTTL), and 382–405 (LKAL…IDRA). Positions 456-512 (SAIRFLEDEKDEDENETRTLQRRATPHPGELKNMKKTVENLRNDMNAAKGLDSNKNE) form a coiled coil. A disordered region spans residues 464–485 (EKDEDENETRTLQRRATPHPGE). Threonine 480 is subject to Phosphothreonine.

In terms of assembly, interacts with DLG1. May form a complex with DLG1 and ERBIN, where interaction between LRRC1 and ERBIN is indirect.

Its subcellular location is the cytoplasm. It localises to the membrane. This Mus musculus (Mouse) protein is Leucine-rich repeat-containing protein 1 (Lrrc1).